We begin with the raw amino-acid sequence, 432 residues long: Adhesin YadA (432 aa).

Residues Met1–Ala25 form the signal peptide. A surface exposed passenger domain region spans residues Glu26–Tyr340. The stretch at Val242–Leu263 forms a coiled coil. An outer membrane translocation of the passenger domain region spans residues Thr341–Gly379. 4 beta stranded membrane-spanning segments follow: residues Gly379–Gly389, Ser393–Val404, Lys411–Ala417, and Asn421–Trp432. The tract at residues Lys380 to Trp432 is translocator domain.

The protein belongs to the autotransporter-2 (AT-2) (TC 1.B.40) family. Homotrimer.

It localises to the cell surface. It is found in the cell outer membrane. Collagen-binding outer membrane protein forming a fibrillar matrix on the bacterial cell surface. Promotes attachment to eukaryotic cells and after invasion, is the major adhesin in infected tissue. Constitutes an alternative uptake pathway under conditions in which invasin synthesis is repressed. The protein is Adhesin YadA (yadA) of Yersinia pseudotuberculosis serotype I (strain IP32953).